A 122-amino-acid polypeptide reads, in one-letter code: Large ribosomal subunit protein uL18 (122 aa).

This sequence belongs to the universal ribosomal protein uL18 family. As to quaternary structure, part of the 50S ribosomal subunit; part of the 5S rRNA/L5/L18/L25 subcomplex. Contacts the 5S and 23S rRNAs.

Functionally, this is one of the proteins that bind and probably mediate the attachment of the 5S RNA into the large ribosomal subunit, where it forms part of the central protuberance. In Mycobacterium ulcerans (strain Agy99), this protein is Large ribosomal subunit protein uL18.